The chain runs to 212 residues: Cytidylate kinase (212 aa).

An ATP-binding site is contributed by 7–15 (GPAASGKGT).

It belongs to the cytidylate kinase family. Type 1 subfamily.

The protein resides in the cytoplasm. The catalysed reaction is CMP + ATP = CDP + ADP. The enzyme catalyses dCMP + ATP = dCDP + ADP. The polypeptide is Cytidylate kinase (Rhodopseudomonas palustris (strain BisB18)).